The following is a 626-amino-acid chain: Glyco-Gag protein (626 aa).

The Cytoplasmic segment spans residues 1-66; that stretch reads LGDVPGTSGA…SVWNRSRAAR (66 aa). Residues 67–86 form a helical membrane-spanning segment; sequence LVCCSIVLCCLCLTVFLYLS. The Extracellular portion of the chain corresponds to 87-626; it reads ENMGQAVTTP…PQASLLTLDD (540 aa). N-linked (GlcNAc...) asparagine; by host glycosylation occurs at N113. 2 stretches are compositionally biased toward pro residues: residues 198 to 212 and 249 to 261; these read PPSA…PLST and DPPP…PPSP. Disordered stretches follow at residues 198 to 306 and 522 to 626; these read PPSA…FPLR and RETP…TLDD. Composition is skewed to basic and acidic residues over residues 522–554 and 574–607; these read RETP…EKER and RQDR…DCPK. Residues 526 to 566 are a coiled coil; it reads EEREERIRRETEEKEERRRAEDVQREKERDRRRHREMSKLL. A CCHC-type zinc finger spans residues 590 to 607; sequence DQCAYCKEKGHWARDCPK.

Post-translationally, glycosylated by host. Cleaved by host near the middle of the molecule, releasing the c-terminal half containing capsid and nucleoprotein domains op GAG.

Its subcellular location is the host cell membrane. Its function is as follows. Plays a role in viral particle release. Presumably acts by facilitating the fission of the virion bud at the cell surface. May prevent the antiviral activity of murine APOBEC3. This Mus musculus (Mouse) protein is Glyco-Gag protein.